The sequence spans 1138 residues: BMP-2-inducible protein kinase (1138 aa).

Residue serine 13 is modified to Phosphoserine. In terms of domain architecture, Protein kinase spans valine 48–phenylalanine 313. Residues leucine 54–valine 62 and lysine 76 each bind ATP. Residue aspartate 177 is the Proton acceptor of the active site. Disordered regions lie at residues threonine 355–glutamine 435, asparagine 638–alanine 831, and proline 906–threonine 1018. The span at isoleucine 358–threonine 390 shows a compositional bias: polar residues. Residues valine 417 to glutamine 435 show a composition bias toward low complexity. At serine 676 the chain carries Phosphoserine. The span at histidine 684–serine 701 shows a compositional bias: polar residues. Over residues lysine 706–serine 715 the composition is skewed to basic and acidic residues. A phosphoserine mark is found at serine 733, serine 806, and serine 807. The span at aspartate 787 to proline 813 shows a compositional bias: basic and acidic residues. Phosphothreonine is present on threonine 819. Serine 908 carries the phosphoserine modification. Positions threonine 915–lysine 926 are enriched in polar residues. Basic residues predominate over residues valine 951–arginine 965. Serine 1010, serine 1012, serine 1013, serine 1020, serine 1022, serine 1087, and serine 1091 each carry phosphoserine. Residues threonine 1117–glutamine 1138 are disordered.

This sequence belongs to the protein kinase superfamily. Ser/Thr protein kinase family. Post-translationally, autophosphorylated. Expressed in osteocytes and osteoblasts.

Its subcellular location is the nucleus. The enzyme catalyses L-seryl-[protein] + ATP = O-phospho-L-seryl-[protein] + ADP + H(+). The catalysed reaction is L-threonyl-[protein] + ATP = O-phospho-L-threonyl-[protein] + ADP + H(+). In terms of biological role, may be involved in osteoblast differentiation. The polypeptide is BMP-2-inducible protein kinase (Bmp2k) (Mus musculus (Mouse)).